Consider the following 77-residue polypeptide: U8-lycotoxin-Ls1i (77 aa).

Residues methionine 1–valine 20 form the signal peptide. Residues glutamine 21–arginine 26 constitute a propeptide that is removed on maturation.

Belongs to the neurotoxin 19 (CSTX) family. 08 (U8-Lctx) subfamily. Contains 4 disulfide bonds. As to expression, expressed by the venom gland.

The protein resides in the secreted. This chain is U8-lycotoxin-Ls1i, found in Lycosa singoriensis (Wolf spider).